The sequence spans 238 residues: Purine nucleoside phosphorylase DeoD-type (238 aa).

Histidine 4 is an a purine D-ribonucleoside binding site. Phosphate-binding positions include glycine 20, arginine 24, arginine 43, and 87–90; that span reads RVGS. A purine D-ribonucleoside is bound by residues 179–181 and 203–204; these read EME and SD. Catalysis depends on aspartate 204, which acts as the Proton donor.

It belongs to the PNP/UDP phosphorylase family. Homohexamer; trimer of homodimers.

The enzyme catalyses a purine D-ribonucleoside + phosphate = a purine nucleobase + alpha-D-ribose 1-phosphate. The catalysed reaction is a purine 2'-deoxy-D-ribonucleoside + phosphate = a purine nucleobase + 2-deoxy-alpha-D-ribose 1-phosphate. Functionally, catalyzes the reversible phosphorolytic breakdown of the N-glycosidic bond in the beta-(deoxy)ribonucleoside molecules, with the formation of the corresponding free purine bases and pentose-1-phosphate. The chain is Purine nucleoside phosphorylase DeoD-type from Haemophilus influenzae (strain PittGG).